The following is a 480-amino-acid chain: Trigger factor (480 aa).

The 96-residue stretch at 169–264 (GDIAVVDFKG…LKELKEKELP (96 aa)) folds into the PPIase FKBP-type domain. Residues 441-480 (PEGSLSPAEETEAAESDADADVSQTEQENSEPSTTEVTEG) are disordered. Over residues 449-460 (EETEAAESDADA) the composition is skewed to acidic residues. Residues 462-480 (VSQTEQENSEPSTTEVTEG) are compositionally biased toward polar residues.

This sequence belongs to the FKBP-type PPIase family. Tig subfamily.

Its subcellular location is the cytoplasm. It carries out the reaction [protein]-peptidylproline (omega=180) = [protein]-peptidylproline (omega=0). In terms of biological role, involved in protein export. Acts as a chaperone by maintaining the newly synthesized protein in an open conformation. Functions as a peptidyl-prolyl cis-trans isomerase. In Nostoc punctiforme (strain ATCC 29133 / PCC 73102), this protein is Trigger factor.